A 489-amino-acid polypeptide reads, in one-letter code: Pluviatolide synthase (489 aa).

A helical transmembrane segment spans residues 6–26 (SVLAMSSTLILALAMALIFLF). A heme-binding site is contributed by C432.

This sequence belongs to the cytochrome P450 family. Heme is required as a cofactor. As to expression, expressed in leaves, rhizomes and stems.

Its subcellular location is the membrane. The catalysed reaction is (-)-matairesinol + reduced [NADPH--hemoprotein reductase] + O2 = (-)-pluviatolide + oxidized [NADPH--hemoprotein reductase] + 2 H2O + H(+). It participates in aromatic compound metabolism; phenylpropanoid biosynthesis. In terms of biological role, cytochrome P450 involved in the biosynthesis of etoposide, a chemotherapeutic compound of the topoisomerase inhibitor family. Catalyzes the conversion of matairesinol to pluviatolide. This chain is Pluviatolide synthase, found in Sinopodophyllum hexandrum (Himalayan may apple).